Here is a 136-residue protein sequence, read N- to C-terminus: Protein Tat (136 aa).

A cysteine-rich region spans residues 22 to 37 (CTNCYCKKCCFHCPVC). The segment at 38-48 (FTKKALGISYG) is core. Over residues 48 to 57 (GRKRRGRKSA) the composition is skewed to basic residues. The tract at residues 48-136 (GRKRRGRKSA…SGSSGSACKH (89 aa)) is disordered. The short motif at 49–55 (RKRRGRK) is the Nuclear localization signal, and RNA-binding (TAR) element. Polar residues predominate over residues 58–73 (VHSTNNQDPVRQQSLP). Low complexity predominate over residues 104-120 (SSVSSGRTSGTSSSGYT). Over residues 123–136 (FKTSSGSSGSACKH) the composition is skewed to polar residues.

This sequence belongs to the lentiviruses Tat family. Interacts with host CCNT1. Associates with the P-TEFb complex composed at least of Tat, P-TEFb (CDK9 and CCNT1), TAR RNA, RNA Pol II. Interacts with CCNT2; the resulting complex is unable to bind to TAR RNA.

It is found in the host nucleus. The protein resides in the host nucleolus. Functionally, transcriptional activator that increases RNA Pol II processivity, thereby increasing the level of full-length viral transcripts. Recognizes a hairpin structure at the 5'-LTR of the nascent viral mRNAs referred to as the transactivation responsive RNA element (TAR) and recruits the cyclin T1-CDK9 complex (P-TEFb complex) that will in turn hyperphosphorylate the RNA polymerase II to allow efficient elongation. The CDK9 component of P-TEFb and other Tat-activated kinases hyperphosphorylate the C-terminus of RNA Pol II that becomes stabilized and much more processive. Extracellular circulating Tat can be endocytosed by surrounding uninfected cells via the binding to several surface receptors. Endosomal low pH allows Tat to cross the endosome membrane to enter the cytosol and eventually further translocate into the nucleus, thereby inducing severe cell dysfunctions ranging from cell activation to cell death. Through. In Simian immunodeficiency virus (isolate TAN1) (SIV-cpz), this protein is Protein Tat.